We begin with the raw amino-acid sequence, 441 residues long: Ribosomal protein uS12 methylthiotransferase RimO (441 aa).

The region spanning 7 to 117 (PKISFVSLGC…VLEAVHRALP (111 aa)) is the MTTase N-terminal domain. Residues Cys-16, Cys-52, Cys-81, Cys-148, Cys-152, and Cys-155 each coordinate [4Fe-4S] cluster. Positions 134–371 (LTPRHYAYLK…MARQQKISAR (238 aa)) constitute a Radical SAM core domain. The TRAM domain occupies 374 to 440 (KRKVGTRQQV…AYDLHGTVAG (67 aa)).

Belongs to the methylthiotransferase family. RimO subfamily. [4Fe-4S] cluster is required as a cofactor.

It is found in the cytoplasm. The catalysed reaction is L-aspartate(89)-[ribosomal protein uS12]-hydrogen + (sulfur carrier)-SH + AH2 + 2 S-adenosyl-L-methionine = 3-methylsulfanyl-L-aspartate(89)-[ribosomal protein uS12]-hydrogen + (sulfur carrier)-H + 5'-deoxyadenosine + L-methionine + A + S-adenosyl-L-homocysteine + 2 H(+). Functionally, catalyzes the methylthiolation of an aspartic acid residue of ribosomal protein uS12. This chain is Ribosomal protein uS12 methylthiotransferase RimO, found in Rhodopseudomonas palustris (strain BisA53).